We begin with the raw amino-acid sequence, 163 residues long: Transcriptional repressor NrdR (163 aa).

A zinc finger spans residues 3-34 (CPFCAHPEDKVVDSRESKEGESIRRRRECLKC). The ATP-cone domain occupies 49-139 (YMVVKKDGRR…VYLDFKDVRE (91 aa)).

The protein belongs to the NrdR family. Requires Zn(2+) as cofactor.

Its function is as follows. Negatively regulates transcription of bacterial ribonucleotide reductase nrd genes and operons by binding to NrdR-boxes. The protein is Transcriptional repressor NrdR of Koribacter versatilis (strain Ellin345).